A 193-amino-acid polypeptide reads, in one-letter code: Peptidyl-tRNA hydrolase (193 aa).

Residue Tyr16 participates in tRNA binding. The Proton acceptor role is filled by His21. Residues Phe67, Asn69, and Asn115 each contribute to the tRNA site.

This sequence belongs to the PTH family. Monomer.

It localises to the cytoplasm. It carries out the reaction an N-acyl-L-alpha-aminoacyl-tRNA + H2O = an N-acyl-L-amino acid + a tRNA + H(+). In terms of biological role, hydrolyzes ribosome-free peptidyl-tRNAs (with 1 or more amino acids incorporated), which drop off the ribosome during protein synthesis, or as a result of ribosome stalling. Catalyzes the release of premature peptidyl moieties from peptidyl-tRNA molecules trapped in stalled 50S ribosomal subunits, and thus maintains levels of free tRNAs and 50S ribosomes. In Vesicomyosocius okutanii subsp. Calyptogena okutanii (strain HA), this protein is Peptidyl-tRNA hydrolase.